The sequence spans 220 residues: Large ribosomal subunit protein bL9 (220 aa).

A compositionally biased stretch (low complexity) spans 167-184; sequence AAAEVEQAEDVAAAEQQD. The interval 167–220 is disordered; the sequence is AAAEVEQAEDVAAAEQQDSSPVDDHADDADGVADGEGRDEGAGDASDEEEMPST. Positions 211–220 are enriched in acidic residues; sequence ASDEEEMPST.

Belongs to the bacterial ribosomal protein bL9 family.

Binds to the 23S rRNA. The sequence is that of Large ribosomal subunit protein bL9 from Anaplasma marginale (strain Florida).